Reading from the N-terminus, the 344-residue chain is HTH-type transcriptional repressor MelR (344 aa).

The HTH lacI-type domain maps to Val-2–Gly-58. A DNA-binding region (H-T-H motif) is located at residues Ile-4–Asn-23.

The protein resides in the cytoplasm. Functionally, represses the melibiose operon melREDCA in the absence of melibiose or raffinose. Binds to two binding sites at the promoter region of the operon. This chain is HTH-type transcriptional repressor MelR, found in Bacillus subtilis (strain 168).